The chain runs to 211 residues: Thiamine-phosphate synthase (211 aa).

4-amino-2-methyl-5-(diphosphooxymethyl)pyrimidine-binding positions include 37–41 (QLRIK) and Asn-69. Residues Asp-70 and Asp-89 each contribute to the Mg(2+) site. Ser-108 serves as a coordination point for 4-amino-2-methyl-5-(diphosphooxymethyl)pyrimidine. 134–136 (TQT) is a 2-[(2R,5Z)-2-carboxy-4-methylthiazol-5(2H)-ylidene]ethyl phosphate binding site. Residue Lys-137 coordinates 4-amino-2-methyl-5-(diphosphooxymethyl)pyrimidine. 2-[(2R,5Z)-2-carboxy-4-methylthiazol-5(2H)-ylidene]ethyl phosphate is bound by residues Gly-166 and 186–187 (VS).

It belongs to the thiamine-phosphate synthase family. The cofactor is Mg(2+).

It carries out the reaction 2-[(2R,5Z)-2-carboxy-4-methylthiazol-5(2H)-ylidene]ethyl phosphate + 4-amino-2-methyl-5-(diphosphooxymethyl)pyrimidine + 2 H(+) = thiamine phosphate + CO2 + diphosphate. The enzyme catalyses 2-(2-carboxy-4-methylthiazol-5-yl)ethyl phosphate + 4-amino-2-methyl-5-(diphosphooxymethyl)pyrimidine + 2 H(+) = thiamine phosphate + CO2 + diphosphate. It catalyses the reaction 4-methyl-5-(2-phosphooxyethyl)-thiazole + 4-amino-2-methyl-5-(diphosphooxymethyl)pyrimidine + H(+) = thiamine phosphate + diphosphate. It functions in the pathway cofactor biosynthesis; thiamine diphosphate biosynthesis; thiamine phosphate from 4-amino-2-methyl-5-diphosphomethylpyrimidine and 4-methyl-5-(2-phosphoethyl)-thiazole: step 1/1. Condenses 4-methyl-5-(beta-hydroxyethyl)thiazole monophosphate (THZ-P) and 2-methyl-4-amino-5-hydroxymethyl pyrimidine pyrophosphate (HMP-PP) to form thiamine monophosphate (TMP). This chain is Thiamine-phosphate synthase, found in Escherichia coli O139:H28 (strain E24377A / ETEC).